The sequence spans 217 residues: Ras-related protein Rab-19 (217 aa).

GTP-binding residues include serine 26, valine 28, glycine 29, lysine 30, threonine 31, cysteine 32, tyrosine 42, serine 43, glutamate 44, serine 45, and threonine 49. Threonine 31 contributes to the Mg(2+) binding site. The short motif at 39–54 (SGVYSESQQNTIGVDF) is the Switch 1 element. Mg(2+) is bound by residues threonine 49 and aspartate 72. The Switch 2 signature appears at 74–89 (AGQERFRTITQSYYRS). 7 residues coordinate GTP: glycine 75, asparagine 130, lysine 131, aspartate 133, serine 161, alanine 162, and lysine 163. Residues cysteine 215 and cysteine 217 are each lipidated (S-geranylgeranyl cysteine). A Cysteine methyl ester modification is found at cysteine 217.

Belongs to the small GTPase superfamily. Rab family. Mg(2+) is required as a cofactor. As to expression, expressed in a tissue-specific manner. Detected at high levels in intestine, lung and spleen, and at a lower level in kidney.

The protein resides in the cell membrane. The catalysed reaction is GTP + H2O = GDP + phosphate + H(+). With respect to regulation, regulated by guanine nucleotide exchange factors (GEFs) which promote the exchange of bound GDP for free GTP. Regulated by GTPase activating proteins (GAPs) which increase the GTP hydrolysis activity. Inhibited by GDP dissociation inhibitors (GDIs). The small GTPases Rab are key regulators of intracellular membrane trafficking, from the formation of transport vesicles to their fusion with membranes. Rabs cycle between an inactive GDP-bound form and an active GTP-bound form that is able to recruit to membranes different set of downstream effectors directly responsible for vesicle formation, movement, tethering and fusion. This is Ras-related protein Rab-19 from Mus musculus (Mouse).